We begin with the raw amino-acid sequence, 1228 residues long: DNA-directed RNA polymerase subunit beta (1228 aa).

A disordered region spans residues 1175–1204; sequence ESVDEDEQPQGLGAFEIGGDEIEEDKEDDK. The segment covering 1192–1202 has biased composition (acidic residues); sequence GGDEIEEDKED.

Belongs to the RNA polymerase beta chain family. The RNAP catalytic core consists of 2 alpha, 1 beta, 1 beta' and 1 omega subunit. When a sigma factor is associated with the core the holoenzyme is formed, which can initiate transcription.

It carries out the reaction RNA(n) + a ribonucleoside 5'-triphosphate = RNA(n+1) + diphosphate. Functionally, DNA-dependent RNA polymerase catalyzes the transcription of DNA into RNA using the four ribonucleoside triphosphates as substrates. This is DNA-directed RNA polymerase subunit beta from Caldicellulosiruptor bescii (strain ATCC BAA-1888 / DSM 6725 / KCTC 15123 / Z-1320) (Anaerocellum thermophilum).